Consider the following 371-residue polypeptide: MLLVSTVSAVPGLFSPPSSPSNSSQEELLDDRDPLLVRAELALLSTIFVAVALSNGLVLGALIRRGRRGRWAPMHVFISHLCLADLAVALFQVLPQLAWDATDRFHGPDALCRAVKYLQMVGMYASSYMILAMTLDRHRAICRPMLAYRHGGGARWNRPVLVAWAFSLLLSLPQLFIFAQRDVGNGSGVFDCWARFAEPWGLRAYVTWIALMVFVAPALGIAACQVLIFREIHASLVPGPSERAGRRRRGRRTGSPSEGAHVSAAMAKTVRMTLVIVIVYVLCWAPFFLVQLWAAWDPEAPLERPPFVLLMLLASLNSCTNPWIYASFSSSVSSELRSLLCCAQRHTTHSLGPQDESCATASSSLMKDTPS.

At 1–38 (MLLVSTVSAVPGLFSPPSSPSNSSQEELLDDRDPLLVR) the chain is on the extracellular side. A glycan (N-linked (GlcNAc...) asparagine) is linked at asparagine 22. A helical membrane pass occupies residues 39–63 (AELALLSTIFVAVALSNGLVLGALI). The Cytoplasmic segment spans residues 64–77 (RRGRRGRWAPMHVF). Residues 78–98 (ISHLCLADLAVALFQVLPQLA) form a helical membrane-spanning segment. Residues 99–113 (WDATDRFHGPDALCR) lie on the Extracellular side of the membrane. The chain crosses the membrane as a helical span at residues 114–135 (AVKYLQMVGMYASSYMILAMTL). Residues 136-159 (DRHRAICRPMLAYRHGGGARWNRP) lie on the Cytoplasmic side of the membrane. The helical transmembrane segment at 160-180 (VLVAWAFSLLLSLPQLFIFAQ) threads the bilayer. Residues 181-200 (RDVGNGSGVFDCWARFAEPW) lie on the Extracellular side of the membrane. Asparagine 185 is a glycosylation site (N-linked (GlcNAc...) asparagine). The helical transmembrane segment at 201–220 (GLRAYVTWIALMVFVAPALG) threads the bilayer. Residues 221-271 (IAACQVLIFREIHASLVPGPSERAGRRRRGRRTGSPSEGAHVSAAMAKTVR) lie on the Cytoplasmic side of the membrane. The disordered stretch occupies residues 240 to 260 (PSERAGRRRRGRRTGSPSEGA). A helical membrane pass occupies residues 272–293 (MTLVIVIVYVLCWAPFFLVQLW). The Extracellular segment spans residues 294 to 308 (AAWDPEAPLERPPFV). Residues 309 to 328 (LLMLLASLNSCTNPWIYASF) form a helical membrane-spanning segment. Topologically, residues 329–371 (SSSVSSELRSLLCCAQRHTTHSLGPQDESCATASSSLMKDTPS) are cytoplasmic. 2 S-palmitoyl cysteine lipidation sites follow: cysteine 341 and cysteine 342. A disordered region spans residues 349–371 (HSLGPQDESCATASSSLMKDTPS). Over residues 357–371 (SCATASSSLMKDTPS) the composition is skewed to polar residues.

This sequence belongs to the G-protein coupled receptor 1 family. Vasopressin/oxytocin receptor subfamily. As to quaternary structure, interacts with ARRDC4. Identified in a complex containing at least ARRDC4, V2R and HGS. Interacts with TMEM147. Kidney.

It is found in the cell membrane. In terms of biological role, receptor for arginine vasopressin. The activity of this receptor is mediated by G proteins which activate adenylate cyclase. Involved in renal water reabsorption. The chain is Vasopressin V2 receptor (Avpr2) from Rattus norvegicus (Rat).